Consider the following 187-residue polypeptide: Large ribosomal subunit protein uL5 (187 aa).

It belongs to the universal ribosomal protein uL5 family. As to quaternary structure, part of the 50S ribosomal subunit; part of the 5S rRNA/L5/L18/L25 subcomplex. Contacts the 5S rRNA and the P site tRNA. Forms a bridge to the 30S subunit in the 70S ribosome.

This is one of the proteins that bind and probably mediate the attachment of the 5S RNA into the large ribosomal subunit, where it forms part of the central protuberance. In the 70S ribosome it contacts protein S13 of the 30S subunit (bridge B1b), connecting the 2 subunits; this bridge is implicated in subunit movement. Contacts the P site tRNA; the 5S rRNA and some of its associated proteins might help stabilize positioning of ribosome-bound tRNAs. This is Large ribosomal subunit protein uL5 from Saccharopolyspora erythraea (strain ATCC 11635 / DSM 40517 / JCM 4748 / NBRC 13426 / NCIMB 8594 / NRRL 2338).